The chain runs to 290 residues: Elongation factor Ts (290 aa).

Positions 81–84 (TDFV) are involved in Mg(2+) ion dislocation from EF-Tu.

This sequence belongs to the EF-Ts family.

Its subcellular location is the cytoplasm. In terms of biological role, associates with the EF-Tu.GDP complex and induces the exchange of GDP to GTP. It remains bound to the aminoacyl-tRNA.EF-Tu.GTP complex up to the GTP hydrolysis stage on the ribosome. This Vesicomyosocius okutanii subsp. Calyptogena okutanii (strain HA) protein is Elongation factor Ts.